Reading from the N-terminus, the 546-residue chain is MAAKDIRFGEDARTRMVRGVNVLANAVKATLGPKGRNVVLEKSFGAPTITKDGVSVAKEIELADKFENMGAQMVKEVASKTNDNAGDGTTTATVLAQALIREGAKAVAAGMNPMDLKRGIDQAVKAAVIELKNISKPTTDDKAIAQVGTISANSDESIGNIIAEAMQKVGKEGVITVEEGSGLENELDVVEGMQFDRGYLSPYFINNQQSQSADLDDPFILLHDKKISNVRDLLPVLEGVAKAGKPLLIVAEEVEGEALATLVVNTIRGIVKVVAVKAPGFGDRRKAMLEDMAVLTGGTVISEEVGLALEKATIKDLGRAKKVQVSKENTTIIDGAGDSATIEARVGQIKTQIEDTSSDYDREKLQERVAKLAGGVAVIKVGASTEIEMKEKKARVEDALHATRAAVEEGVVPGGGVALVRALVAVGNLTGANEDQTHGIQIALRAMEAPLREIVANAGEEPSVILNKVKEGTGNYGYNAANGEFGDMVEFGILDPTKVTRSALQNAASIAGLMITTEAMVADAPKKDEPAMPAGGGMGGMGGMDF.

ATP contacts are provided by residues 30-33, K51, 87-91, G415, 479-481, and D495; these read TLGP, DGTTT, and NAA. A disordered region spans residues 526 to 546; that stretch reads KKDEPAMPAGGGMGGMGGMDF. Gly residues predominate over residues 534-546; it reads AGGGMGGMGGMDF.

It belongs to the chaperonin (HSP60) family. Forms a cylinder of 14 subunits composed of two heptameric rings stacked back-to-back. Interacts with the co-chaperonin GroES.

The protein resides in the cytoplasm. It catalyses the reaction ATP + H2O + a folded polypeptide = ADP + phosphate + an unfolded polypeptide.. Together with its co-chaperonin GroES, plays an essential role in assisting protein folding. The GroEL-GroES system forms a nano-cage that allows encapsulation of the non-native substrate proteins and provides a physical environment optimized to promote and accelerate protein folding. In Xanthomonas campestris pv. campestris (strain 8004), this protein is Chaperonin GroEL.